The chain runs to 258 residues: Transcription initiation factor TFIID subunit 9B (258 aa).

The residue at position 1 (Met1) is an N-acetylmethionine. Position 147 is a phosphoserine (Ser147). 2 positions are modified to phosphothreonine: Thr159 and Thr174. Ser177 carries the phosphoserine modification. The span at 227–236 (SSQSTATDSN) shows a compositional bias: polar residues. Residues 227 to 258 (SSQSTATDSNPLKRKHDDDDDDDDDDDDNDTM) are disordered. The span at 244–258 (DDDDDDDDDDDNDTM) shows a compositional bias: acidic residues.

Belongs to the TAF9 family. As to quaternary structure, binds TAF5 and TAF6. Component of TFIID and the TATA-binding protein-free TAF complex (TFTC). TFIID is composed of TATA binding protein (TBP) and a number of TBP-associated factors (TAFs). Binds N-terminal domain of p53/TP53 which is essential for transcription.

The protein resides in the nucleus. Its function is as follows. Essential for cell viability. TAF9 and TAF9L are involved in transcriptional activation as well as repression of distinct but overlapping sets of genes. May have a role in gene regulation associated with apoptosis. TAFs are components of the transcription factor IID (TFIID) complex, the TBP-free TAFII complex (TFTC), the PCAF histone acetylase complex and the STAGA transcription coactivator-HAT complex. TFIID or TFTC are essential for the regulation of RNA polymerase II-mediated transcription. The protein is Transcription initiation factor TFIID subunit 9B (Taf9b) of Rattus norvegicus (Rat).